Consider the following 301-residue polypeptide: Golgi to ER traffic protein 2 (301 aa).

The Cytoplasmic portion of the chain corresponds to 1 to 167 (MSEPVVDTAE…LEYNTYNQKL (167 aa)). Low complexity predominate over residues 42–55 (SQGSSVKTSGVKSV). Positions 42 to 93 (SQGSSVKTSGVKSVLDQEKEATSSHDDDPEIQDITEITTPPPRTPPIGEDAP) are disordered. Residues 56–67 (LDQEKEATSSHD) are compositionally biased toward basic and acidic residues. Residues 168-188 (WKFRFLLVRVLVTLFNFFYHY) traverse the membrane as a helical segment. The Lumenal segment spans residues 189–214 (TSISDFHASNYAYVRDLSSEEYPVRD). A helical membrane pass occupies residues 215–234 (FFTWFATSEVVLVAAYYSVF). Topologically, residues 235-278 (HSLGLFHAANQNSIILKVMSMGSMILPQLESYKPLVARFLGYYE) are cytoplasmic. A helical transmembrane segment spans residues 279-299 (LLGIVLGGLSLVIVLFGLLSF). The Lumenal segment spans residues 300–301 (AN).

Belongs to the GET2 family. In terms of assembly, component of the Golgi to ER traffic (GET) complex, which is composed of GET1, GET2 and GET3. Within the complex, GET1 and GET2 form a heterotetramer which is stabilized by phosphatidylinositol binding and which binds to the GET3 homodimer.

The protein resides in the endoplasmic reticulum membrane. It is found in the golgi apparatus membrane. Its function is as follows. Required for the post-translational delivery of tail-anchored (TA) proteins to the endoplasmic reticulum. Together with GET1, acts as a membrane receptor for soluble GET3, which recognizes and selectively binds the transmembrane domain of TA proteins in the cytosol. The GET complex cooperates with the HDEL receptor ERD2 to mediate the ATP-dependent retrieval of resident ER proteins that contain a C-terminal H-D-E-L retention signal from the Golgi to the ER. In Candida dubliniensis (strain CD36 / ATCC MYA-646 / CBS 7987 / NCPF 3949 / NRRL Y-17841) (Yeast), this protein is Golgi to ER traffic protein 2.